The sequence spans 463 residues: ATP-dependent protease ATPase subunit HslU (463 aa).

ATP contacts are provided by residues valine 21, 63-68 (GVGKTE), aspartate 276, glutamate 341, and arginine 413.

This sequence belongs to the ClpX chaperone family. HslU subfamily. In terms of assembly, a double ring-shaped homohexamer of HslV is capped on each side by a ring-shaped HslU homohexamer. The assembly of the HslU/HslV complex is dependent on binding of ATP.

The protein resides in the cytoplasm. Functionally, ATPase subunit of a proteasome-like degradation complex; this subunit has chaperone activity. The binding of ATP and its subsequent hydrolysis by HslU are essential for unfolding of protein substrates subsequently hydrolyzed by HslV. HslU recognizes the N-terminal part of its protein substrates and unfolds these before they are guided to HslV for hydrolysis. The chain is ATP-dependent protease ATPase subunit HslU from Thermotoga sp. (strain RQ2).